Consider the following 777-residue polypeptide: NAD(P)H-quinone oxidoreductase subunit 5, chloroplastic (777 aa).

16 consecutive transmembrane segments (helical) span residues 9–29, 40–60, 89–109, 125–145, 147–167, 185–205, 220–240, 259–279, 290–312, 328–348, 355–375, 397–417, 426–446, 550–570, 604–624, and 731–751; these read WIIP…LLLF, WSFP…YLSI, IDPL…LVLF, FAYL…SNLI, IYIF…FWFT, GDFG…SFEF, NQVH…GAVA, TPIS…FLVA, YIMN…LALA, LGYM…FHLI, ALLF…VGYS, TAFL…CFWS, WLYS…TAFY, LFSL…GIPF, FVTN…IATF, and IFIF…FFVL.

It belongs to the complex I subunit 5 family. In terms of assembly, NDH is composed of at least 16 different subunits, 5 of which are encoded in the nucleus.

It localises to the plastid. The protein localises to the chloroplast thylakoid membrane. The enzyme catalyses a plastoquinone + NADH + (n+1) H(+)(in) = a plastoquinol + NAD(+) + n H(+)(out). The catalysed reaction is a plastoquinone + NADPH + (n+1) H(+)(in) = a plastoquinol + NADP(+) + n H(+)(out). Functionally, NDH shuttles electrons from NAD(P)H:plastoquinone, via FMN and iron-sulfur (Fe-S) centers, to quinones in the photosynthetic chain and possibly in a chloroplast respiratory chain. The immediate electron acceptor for the enzyme in this species is believed to be plastoquinone. Couples the redox reaction to proton translocation, and thus conserves the redox energy in a proton gradient. The protein is NAD(P)H-quinone oxidoreductase subunit 5, chloroplastic (ndhF) of Oenothera elata subsp. hookeri (Hooker's evening primrose).